We begin with the raw amino-acid sequence, 231 residues long: 5'-methylthioadenosine/S-adenosylhomocysteine nucleosidase (231 aa).

Glutamate 12 functions as the Proton acceptor in the catalytic mechanism. Substrate-binding positions include glycine 78, methionine 153, and 174 to 175 (ME). Aspartate 198 serves as the catalytic Proton donor.

This sequence belongs to the PNP/UDP phosphorylase family. MtnN subfamily.

It carries out the reaction S-adenosyl-L-homocysteine + H2O = S-(5-deoxy-D-ribos-5-yl)-L-homocysteine + adenine. The enzyme catalyses S-methyl-5'-thioadenosine + H2O = 5-(methylsulfanyl)-D-ribose + adenine. It catalyses the reaction 5'-deoxyadenosine + H2O = 5-deoxy-D-ribose + adenine. It functions in the pathway amino-acid biosynthesis; L-methionine biosynthesis via salvage pathway; S-methyl-5-thio-alpha-D-ribose 1-phosphate from S-methyl-5'-thioadenosine (hydrolase route): step 1/2. Functionally, catalyzes the irreversible cleavage of the glycosidic bond in both 5'-methylthioadenosine (MTA) and S-adenosylhomocysteine (SAH/AdoHcy) to adenine and the corresponding thioribose, 5'-methylthioribose and S-ribosylhomocysteine, respectively. Also cleaves 5'-deoxyadenosine, a toxic by-product of radical S-adenosylmethionine (SAM) enzymes, into 5-deoxyribose and adenine. This is 5'-methylthioadenosine/S-adenosylhomocysteine nucleosidase from Bacillus cereus (strain G9842).